A 104-amino-acid polypeptide reads, in one-letter code: ATP-dependent Clp protease adapter protein ClpS (104 aa).

Belongs to the ClpS family. In terms of assembly, binds to the N-terminal domain of the chaperone ClpA.

Its function is as follows. Involved in the modulation of the specificity of the ClpAP-mediated ATP-dependent protein degradation. The protein is ATP-dependent Clp protease adapter protein ClpS of Paraburkholderia phymatum (strain DSM 17167 / CIP 108236 / LMG 21445 / STM815) (Burkholderia phymatum).